Reading from the N-terminus, the 168-residue chain is uncharacterized protein (168 aa).

A helical membrane pass occupies residues 23-47 (LFARASIIGVALLLSACATVPMASV).

The protein localises to the membrane. This is an uncharacterized protein from Haemophilus influenzae (strain ATCC 51907 / DSM 11121 / KW20 / Rd).